The chain runs to 146 residues: Putative inactive cytochrome P450 2G1 (146 aa).

Cysteine 91 serves as a coordination point for heme.

The protein belongs to the cytochrome P450 family. It depends on heme as a cofactor.

This is Putative inactive cytochrome P450 2G1 (CYP2G1P) from Homo sapiens (Human).